The following is a 36-amino-acid chain: Pancreatic polypeptide (36 aa).

Phe-36 is modified (phenylalanine amide).

This sequence belongs to the NPY family.

The protein resides in the secreted. In terms of biological role, hormone secreted by pancreatic cells that acts as a regulator of pancreatic and gastrointestinal functions. This Rana temporaria (European common frog) protein is Pancreatic polypeptide (ppy).